Reading from the N-terminus, the 359-residue chain is Phospho-N-acetylmuramoyl-pentapeptide-transferase (359 aa).

A run of 10 helical transmembrane segments spans residues 7 to 27 (RSLT…VNSY), 28 to 48 (IFNS…SLVI), 82 to 102 (MGGI…NNYV), 103 to 123 (DSVG…IGFL), 147 to 167 (ALIA…NPLI), 179 to 199 (IVIF…VNLT), 203 to 223 (DGLA…EIFI), 229 to 249 (LIIY…FLKY), 256 to 276 (IFMG…ISIL), and 337 to 357 (IVEN…VLKI).

It belongs to the glycosyltransferase 4 family. MraY subfamily. Requires Mg(2+) as cofactor.

It is found in the cell inner membrane. It carries out the reaction UDP-N-acetyl-alpha-D-muramoyl-L-alanyl-gamma-D-glutamyl-meso-2,6-diaminopimeloyl-D-alanyl-D-alanine + di-trans,octa-cis-undecaprenyl phosphate = di-trans,octa-cis-undecaprenyl diphospho-N-acetyl-alpha-D-muramoyl-L-alanyl-D-glutamyl-meso-2,6-diaminopimeloyl-D-alanyl-D-alanine + UMP. The protein operates within cell wall biogenesis; peptidoglycan biosynthesis. Its function is as follows. Catalyzes the initial step of the lipid cycle reactions in the biosynthesis of the cell wall peptidoglycan: transfers peptidoglycan precursor phospho-MurNAc-pentapeptide from UDP-MurNAc-pentapeptide onto the lipid carrier undecaprenyl phosphate, yielding undecaprenyl-pyrophosphoryl-MurNAc-pentapeptide, known as lipid I. In Prochlorococcus marinus subsp. pastoris (strain CCMP1986 / NIES-2087 / MED4), this protein is Phospho-N-acetylmuramoyl-pentapeptide-transferase.